The following is a 446-amino-acid chain: CBL-interacting serine/threonine-protein kinase 24 (446 aa).

Residues 11 to 264 (YEVGRTIGEG…IQGIKKDPWF (254 aa)) enclose the Protein kinase domain. ATP-binding positions include 17-25 (IGEGTFAKV) and lysine 40. Aspartate 134 serves as the catalytic Proton acceptor. An activation loop region spans residues 152-179 (DFGLSALPQEGVELLRTTCGTPNYVAPE). A Phosphoserine modification is found at serine 156. A Phosphothreonine modification is found at threonine 168. In terms of domain architecture, NAF spans 305 to 329 (EGPLMMNAFEMITLSQGLNLSALFD). The PPI stretch occupies residues 336–365 (KRQTRFVSRREPSEIIANIEAVANSMGFKS).

It belongs to the protein kinase superfamily. CAMK Ser/Thr protein kinase family. SNF1 subfamily. As to quaternary structure, interacts with CBL1, CBL2, CBL4/SOS3, CBL5, CBL9, CBL10 and with the protein phosphatase 2C ABI2. Requires Mn(2+) as cofactor. Post-translationally, autophosphorylated.

It is found in the cytoplasm. It localises to the nucleus. It carries out the reaction L-seryl-[protein] + ATP = O-phospho-L-seryl-[protein] + ADP + H(+). The catalysed reaction is L-threonyl-[protein] + ATP = O-phospho-L-threonyl-[protein] + ADP + H(+). Involved in the regulatory pathway for the control of intracellular Na(+) and K(+) homeostasis and salt tolerance. Activates the vacuolar H(+)/Ca(2+) antiporter CAX1 and operates in synergy with CBL4/SOS3 to activate the plasma membrane Na(+)/H(+) antiporter SOS1. CIPK serine-threonine protein kinases interact with CBL proteins. Binding of a CBL protein to the regulatory NAF domain of CIPK protein lead to the activation of the kinase in a calcium-dependent manner. Phosphorylates CBL1, CBL4 and CBL10. In Arabidopsis thaliana (Mouse-ear cress), this protein is CBL-interacting serine/threonine-protein kinase 24 (CIPK24).